Here is a 78-residue protein sequence, read N- to C-terminus: Acyl carrier protein (78 aa).

Positions 2–77 constitute a Carrier domain; the sequence is SDTAERVKKI…DAVKYIEKAT (76 aa). Ser37 bears the O-(pantetheine 4'-phosphoryl)serine mark.

It belongs to the acyl carrier protein (ACP) family. Post-translationally, 4'-phosphopantetheine is transferred from CoA to a specific serine of apo-ACP by AcpS. This modification is essential for activity because fatty acids are bound in thioester linkage to the sulfhydryl of the prosthetic group.

The protein resides in the cytoplasm. Its pathway is lipid metabolism; fatty acid biosynthesis. In terms of biological role, carrier of the growing fatty acid chain in fatty acid biosynthesis. The sequence is that of Acyl carrier protein from Chelativorans sp. (strain BNC1).